The chain runs to 87 residues: MAGTSLGARFYRQIKRHPGLIPMIGFIGLGMGSAALYLLRLALRSPDVCWDRKNNPEPWNRLSPNDQYKFLAVSTDYKKLKKDRPDF.

The protein belongs to the complex I NDUFA4 subunit family.

This chain is NADH dehydrogenase [ubiquinone] 1 alpha subcomplex subunit 4-like 2 (NDUFA4L2), found in Bos taurus (Bovine).